Consider the following 210-residue polypeptide: Heart- and neural crest derivatives-expressed protein 2 (210 aa).

A disordered region spans residues 81–101 (SGAGGLMQRPVKRRGTANRKE). Residues 90-101 (PVKRRGTANRKE) are compositionally biased toward basic residues. One can recognise a bHLH domain in the interval 92-144 (KRRGTANRKERRRTISINSAFAELRECIPNVPADTKLSKIKTLRLATSYIAYL).

In terms of assembly, efficient DNA binding requires dimerization with another bHLH protein. Heart, liver and spleen.

The protein resides in the nucleus. In terms of biological role, essential for cardiac morphogenesis and for the development of branchial arches. Binds DNA on E-box consensus sequence 5'-CANNTG-3'. The sequence is that of Heart- and neural crest derivatives-expressed protein 2 (hand2) from Xenopus laevis (African clawed frog).